A 530-amino-acid chain; its full sequence is Capsid protein VP1 (530 aa).

Positions 1–20 are disordered; the sequence is MMMASKDATSSVDGASGAGQ. Positions 1–225 are shell domain; that stretch reads MMMASKDATS…FLFLVPPTVE (225 aa). Residues 226 to 278 are P1 sub-domain 1; the sequence is QKTRPFTLPNLPLSSLSNSRAPLPISSMGISPDNVQSVQFQNGRCTLDGRLVG. Residues 226–530 form a protruding domain region; that stretch reads QKTRPFTLPN…SARGRLGLRR (305 aa). The segment at 279-405 is P2 sub-domain; it reads TTPVSLSHVA…GSSITEATHL (127 aa). Positions 406-530 are P1 sub-domain 2; that stretch reads APSVYPPGFG…SARGRLGLRR (125 aa). Residues 523–530 are plays a role in binding to host histo-blood group structures antigens and in the formation of P-particles; it reads RGRLGLRR.

It belongs to the caliciviridae capsid protein family. In terms of assembly, homodimer. Homomultimer. Interacts with the minor capsid protein VP2. Interacts (via C-terminus) with host type I histo-blood group structures antigens at the surface of target cells. Post-translationally, may be cleaved by host protease to generate soluble capsid protein. Assembled capsid cannot be cleaved.

The protein localises to the virion. The protein resides in the host cytoplasm. Functionally, capsid protein self assembles to form an icosahedral capsid with a T=3 symmetry, about 38 nm in diameter, and consisting of 180 capsid proteins. A smaller form of capsid with a diameter of 23 nm might be capsid proteins assembled as icosahedron with T=1 symmetry. The capsid encapsulates the genomic RNA and is decorated with VP2 proteins. Attaches virion to target cells by binding histo-blood group antigens (HBGAs) present on gastroduodenal epithelial cells. Its function is as follows. The soluble capsid protein may play a role in viral immunoevasion. In Norovirus (strain Human/NoV/United States/Norwalk/1968/GI) (Hu/NV/NV/1968/US), this protein is Capsid protein VP1.